The chain runs to 212 residues: Large ribosomal subunit protein uL1 (212 aa).

The protein belongs to the universal ribosomal protein uL1 family. As to quaternary structure, part of the 50S ribosomal subunit.

Functionally, binds directly to 23S rRNA. Probably involved in E site tRNA release. Protein L1 is also a translational repressor protein, it controls the translation of its operon by binding to its mRNA. The chain is Large ribosomal subunit protein uL1 from Methanobrevibacter smithii (strain ATCC 35061 / DSM 861 / OCM 144 / PS).